Reading from the N-terminus, the 464-residue chain is UDP-N-acetylmuramate--L-alanine ligase (464 aa).

Position 115–121 (115–121 (GSHGKTT)) interacts with ATP.

This sequence belongs to the MurCDEF family.

It localises to the cytoplasm. It catalyses the reaction UDP-N-acetyl-alpha-D-muramate + L-alanine + ATP = UDP-N-acetyl-alpha-D-muramoyl-L-alanine + ADP + phosphate + H(+). Its pathway is cell wall biogenesis; peptidoglycan biosynthesis. Cell wall formation. This is UDP-N-acetylmuramate--L-alanine ligase from Pelagibacter ubique (strain HTCC1062).